The primary structure comprises 255 residues: tRNA pseudouridine synthase A (255 aa).

Residue Asp-56 is the Nucleophile of the active site. Tyr-114 is a substrate binding site.

The protein belongs to the tRNA pseudouridine synthase TruA family. As to quaternary structure, homodimer.

The catalysed reaction is uridine(38/39/40) in tRNA = pseudouridine(38/39/40) in tRNA. Functionally, formation of pseudouridine at positions 38, 39 and 40 in the anticodon stem and loop of transfer RNAs. The protein is tRNA pseudouridine synthase A of Methylacidiphilum infernorum (isolate V4) (Methylokorus infernorum (strain V4)).